The chain runs to 68 residues: Disintegrin EMF10B (68 aa).

The 68-residue stretch at 1–68 (ELLQNSGNPC…SDCPRNPVFK (68 aa)) folds into the Disintegrin domain. 4 cysteine pairs are disulfide-bonded: cysteine 10-cysteine 33, cysteine 24-cysteine 30, cysteine 29-cysteine 54, and cysteine 42-cysteine 61. A Cell attachment site; atypical (MGD) motif is present at residues 46–48 (MGD).

This sequence belongs to the venom metalloproteinase (M12B) family. P-II subfamily. P-IIe sub-subfamily. As to quaternary structure, heterodimer with EMF10A; disulfide-linked. Expressed by the venom gland.

Its subcellular location is the secreted. Its function is as follows. Extremely potent and selective inhibitor of integrin alpha-5/beta-1 (ITGA5/ITGB1). Partially inhibits adhesion of cells expressing alpha-IIb/beta-3 (ITGA2B/ITGB3), alpha-V/beta-3 (ITGAV/ITGB3), and alpha-4/beta-1 (ITGA4/ITGB1) to appropriate ligands only at concentration higher than 500 nM. Weakly inhibits ADP-induced platelet aggregation. The chain is Disintegrin EMF10B from Eristicophis macmahoni (Leaf-nosed viper).